Consider the following 142-residue polypeptide: Nucleoside diphosphate kinase (142 aa).

6 residues coordinate ATP: lysine 11, phenylalanine 59, arginine 87, threonine 93, arginine 104, and asparagine 114. Catalysis depends on histidine 117, which acts as the Pros-phosphohistidine intermediate.

This sequence belongs to the NDK family. Homotetramer. Mg(2+) is required as a cofactor.

It is found in the cytoplasm. The catalysed reaction is a 2'-deoxyribonucleoside 5'-diphosphate + ATP = a 2'-deoxyribonucleoside 5'-triphosphate + ADP. It catalyses the reaction a ribonucleoside 5'-diphosphate + ATP = a ribonucleoside 5'-triphosphate + ADP. Functionally, major role in the synthesis of nucleoside triphosphates other than ATP. The ATP gamma phosphate is transferred to the NDP beta phosphate via a ping-pong mechanism, using a phosphorylated active-site intermediate. This chain is Nucleoside diphosphate kinase, found in Pectobacterium carotovorum subsp. carotovorum (strain PC1).